Consider the following 1105-residue polypeptide: Pheromone-regulated membrane protein 10 (1105 aa).

A compositionally biased stretch (polar residues) spans 1-11 (MSDNRPTYDTS). Disordered stretches follow at residues 1–22 (MSDNRPTYDTSSSDEEPSNHFH), 36–55 (RKQNHKKHEKPTIAKQTASN), 65–123 (GSNH…FYGD), 151–278 (IKPK…GGGL), 385–473 (AGAS…FLRG), and 520–656 (EQKS…LRHK). Positions 67–82 (NHKFGNSINNNNNNAN) are enriched in low complexity. Residues 85-106 (LGSSSAGTNRRSLISPTSSTHV) show a composition bias toward polar residues. The span at 162-178 (DSSDDDGNNLDEVEDET) shows a compositional bias: acidic residues. Over residues 185–197 (LNQNHPPQQYYET) the composition is skewed to polar residues. The span at 198 to 210 (DSSDEDEEDDDEV) shows a compositional bias: acidic residues. The segment covering 390–413 (LDHSQQSSAAPSTEITPSQSPNQH) has biased composition (polar residues). Low complexity predominate over residues 417–439 (EKSNNNENNQQSTTVESSSSTSS). Residues 446–459 (LARRRASEERKKAE) are compositionally biased toward basic and acidic residues. Polar residues-rich tracts occupy residues 520–539 (EQKSASSLSRVSTGTSGTAL), 592–606 (RTNTVETQGSSNSEE), and 624–633 (MNANLPSFQN). 10 helical membrane-spanning segments follow: residues 782-802 (PPWLCVLFYGLGSLAVTPFAF), 809-829 (LPISFGVGLCVGYLQFYVSSI), 835-855 (SVFEVSAAIVVAFIARGIGSI), 860-880 (LFCFSAIAQGSLAIILPGYII), 903-923 (VIYSLFLGFGITLGAALYGWI), 938-958 (AIDEKWRILFVPMFALCLGLI), 963-983 (WSQVPIMIVIAGIGYIGSFFA), 986-1006 (HFSTVTEFTACIGAFIVGVLG), 1015-1035 (GMAVSAMLPAIFVQVPSGIAS), and 1075-1095 (VEVSIGISVGLFAAALIIYPF).

It belongs to the ThrE exporter (TC 2.A.79) family.

Its subcellular location is the membrane. In Candida albicans (strain SC5314 / ATCC MYA-2876) (Yeast), this protein is Pheromone-regulated membrane protein 10 (PRM10).